The primary structure comprises 76 residues: Conotoxin Lt6.1 (76 aa).

An N-terminal signal peptide occupies residues 1–22 (MKLTCVLIIAVLFLMDNQLITA). The propeptide occupies 23 to 48 (DYPRDEQVYRAVRLRDAMQKSKGSGS). Cystine bridges form between Cys-49–Cys-62, Cys-56–Cys-67, and Cys-61–Cys-75.

This sequence belongs to the conotoxin O1 superfamily. In terms of tissue distribution, expressed by the venom duct.

The protein resides in the secreted. The polypeptide is Conotoxin Lt6.1 (Conus litteratus (Lettered cone)).